We begin with the raw amino-acid sequence, 225 residues long: DNA repair protein RecO (225 aa).

It belongs to the RecO family.

Its function is as follows. Involved in DNA repair and RecF pathway recombination. In Clostridium perfringens (strain ATCC 13124 / DSM 756 / JCM 1290 / NCIMB 6125 / NCTC 8237 / Type A), this protein is DNA repair protein RecO.